The chain runs to 873 residues: Rho GTPase-activating protein gacJJ (873 aa).

The segment at 64-147 (DEPSSINTSS…NVNNSSNAPT (84 aa)) is disordered. Residues 66–91 (PSSINTSSGNIGSNNNSSSNTPLTGS) are compositionally biased toward low complexity. Gly residues predominate over residues 103 to 112 (IGGGGGGGDN). A compositionally biased stretch (low complexity) spans 113–144 (GITNSGNIGSSSNSDLKKSTSSGIVNVNNSSN). In terms of domain architecture, PH spans 301–402 (NPVREGYLKK…WTVLPIVIES (102 aa)). The 194-residue stretch at 428–621 (VPIEKTVSGN…SLIRDYQYIF (194 aa)) folds into the Rho-GAP domain. An SH3 domain is found at 628–694 (EQKILAKSLY…PASYVELLPH (67 aa)). The stretch at 715–761 (MLEMESTKTKNQEIDKNIKQLEITKKELESTINDLENEKAALENDPT) forms a coiled coil.

It localises to the cytoplasm. Rho GTPase-activating protein involved in the signal transduction pathway. This is Rho GTPase-activating protein gacJJ (gacJJ) from Dictyostelium discoideum (Social amoeba).